The following is a 226-amino-acid chain: Octanoyltransferase (226 aa).

The BPL/LPL catalytic domain occupies 34–212 (LAAPDVLLTL…AFSRVFGLEF (179 aa)). Substrate-binding positions include 76-83 (RGGDVTYH), 143-145 (AIG), and 156-158 (GIA). Cys174 acts as the Acyl-thioester intermediate in catalysis.

Belongs to the LipB family.

It is found in the cytoplasm. It carries out the reaction octanoyl-[ACP] + L-lysyl-[protein] = N(6)-octanoyl-L-lysyl-[protein] + holo-[ACP] + H(+). It participates in protein modification; protein lipoylation via endogenous pathway; protein N(6)-(lipoyl)lysine from octanoyl-[acyl-carrier-protein]: step 1/2. Catalyzes the transfer of endogenously produced octanoic acid from octanoyl-acyl-carrier-protein onto the lipoyl domains of lipoate-dependent enzymes. Lipoyl-ACP can also act as a substrate although octanoyl-ACP is likely to be the physiological substrate. In Thermosynechococcus vestitus (strain NIES-2133 / IAM M-273 / BP-1), this protein is Octanoyltransferase.